We begin with the raw amino-acid sequence, 549 residues long: Glucose-6-phosphate isomerase (549 aa).

Catalysis depends on Glu-355, which acts as the Proton donor. Residues His-386 and Lys-514 contribute to the active site.

Belongs to the GPI family.

The protein localises to the cytoplasm. It carries out the reaction alpha-D-glucose 6-phosphate = beta-D-fructose 6-phosphate. The protein operates within carbohydrate biosynthesis; gluconeogenesis. It functions in the pathway carbohydrate degradation; glycolysis; D-glyceraldehyde 3-phosphate and glycerone phosphate from D-glucose: step 2/4. Catalyzes the reversible isomerization of glucose-6-phosphate to fructose-6-phosphate. The sequence is that of Glucose-6-phosphate isomerase from Salmonella paratyphi C (strain RKS4594).